A 134-amino-acid polypeptide reads, in one-letter code: L-ectoine synthase (134 aa).

Belongs to the ectoine synthase family.

It carries out the reaction (2S)-4-acetamido-2-aminobutanoate = L-ectoine + H2O. The protein operates within amine and polyamine biosynthesis; ectoine biosynthesis; L-ectoine from L-aspartate 4-semialdehyde: step 3/3. Catalyzes the circularization of gamma-N-acetyl-alpha,gamma-diaminobutyric acid (ADABA) to ectoine (1,4,5,6-tetrahydro-2-methyl-4-pyrimidine carboxylic acid), which is an excellent osmoprotectant. This Thermobifida fusca (strain YX) protein is L-ectoine synthase.